We begin with the raw amino-acid sequence, 286 residues long: Acyl-CoA thioesterase 2 (286 aa).

Residues D204, T228, and Q278 each act as charge relay system in the active site.

The protein belongs to the C/M/P thioester hydrolase family. In terms of assembly, homotetramer.

The enzyme catalyses a fatty acyl-CoA + H2O = a fatty acid + CoA + H(+). Thioesterase that has relatively broad substrate specificity, hydrolyzing primarily medium- and long-chain acyl-CoA substrates to free fatty acids and CoA. This is Acyl-CoA thioesterase 2 (tesB) from Haemophilus influenzae (strain ATCC 51907 / DSM 11121 / KW20 / Rd).